The chain runs to 418 residues: Homeobox protein H2.0 (418 aa).

The span at 190-216 shows a compositional bias: basic residues; that stretch reads QHQKQQHQQHHHHQHHPKHLHQQHKPP. 3 disordered regions span residues 190–223, 259–296, and 354–418; these read QHQK…STTA, TSPA…RKRS, and RENL…NVVE. The segment covering 259–273 has biased composition (low complexity); it reads TSPAAAAAATSQNGA. The homeobox DNA-binding region spans 295-354; it reads RSWSRAVFSNLQRKGLEIQFQQQKYITKPDRRKLAARLNLTDAQVKVWFQNRRMKWRHTR. The span at 391–403 shows a compositional bias: low complexity; the sequence is DYSSDSCSSVDLS.

The protein belongs to the H2.0 homeobox family. As to expression, expressed in cells of the visceral musculature and its anlagen.

Its subcellular location is the nucleus. Functionally, may play a role in pattern formation during embryonic and imaginal development. Is not essential for visceral muscle morphogenesis. The protein is Homeobox protein H2.0 (H2.0) of Drosophila melanogaster (Fruit fly).